Here is a 47-residue protein sequence, read N- to C-terminus: Protein YpaB (47 aa).

The protein is Protein YpaB (ypaB) of Escherichia coli (strain K12).